The following is a 447-amino-acid chain: Na(+)-translocating NADH-quinone reductase subunit A (447 aa).

Belongs to the NqrA family. Composed of six subunits; NqrA, NqrB, NqrC, NqrD, NqrE and NqrF.

The enzyme catalyses a ubiquinone + n Na(+)(in) + NADH + H(+) = a ubiquinol + n Na(+)(out) + NAD(+). Functionally, NQR complex catalyzes the reduction of ubiquinone-1 to ubiquinol by two successive reactions, coupled with the transport of Na(+) ions from the cytoplasm to the periplasm. NqrA to NqrE are probably involved in the second step, the conversion of ubisemiquinone to ubiquinol. The sequence is that of Na(+)-translocating NADH-quinone reductase subunit A from Klebsiella pneumoniae subsp. pneumoniae (strain ATCC 700721 / MGH 78578).